The chain runs to 152 residues: UPF0225 protein YchJ (152 aa).

It belongs to the UPF0225 family.

The protein is UPF0225 protein YchJ of Salmonella gallinarum (strain 287/91 / NCTC 13346).